The sequence spans 348 residues: Rhodopsin (348 aa).

Methionine 1 is modified (N-acetylmethionine). Over 1 to 36 (MNGTEGLNFYVPFSNKTGVVRSPFEYPQYYLAEPWQ) the chain is Extracellular. N-linked (GlcNAc...) asparagine glycosylation is found at asparagine 2 and asparagine 15. A helical membrane pass occupies residues 37–61 (FSVLAAYMFLLIVLGFPINFLTLYV). The Cytoplasmic segment spans residues 62–73 (TVQHKKLRTPLN). A helical transmembrane segment spans residues 74 to 96 (YIPLNLAVANLFMVFGGFTTTLY). At 97-110 (TSLHAYFVFGPTGC) the chain is on the extracellular side. Cysteine 110 and cysteine 187 form a disulfide bridge. The chain crosses the membrane as a helical span at residues 111–133 (NLEGFFATLGGEIALWSLVVLAI). A 'Ionic lock' involved in activated form stabilization motif is present at residues 134–136 (ERY). Over 134–152 (ERYVVVCKPMSNFRFGENH) the chain is Cytoplasmic. A helical membrane pass occupies residues 153 to 173 (AIMGLALTWVMAMACAAPPLV). The Extracellular portion of the chain corresponds to 174–202 (GWSRYIPEGMQCSCGIDYYTSRQEVNNES). Glutamate 201 contributes to the Zn(2+) binding site. Residues 203 to 224 (FVIYMFVVHFTIPLVIIFFCYG) form a helical membrane-spanning segment. Topologically, residues 225–252 (QLVFTVKEAAAQQQESATTQKAEKEVTR) are cytoplasmic. A helical membrane pass occupies residues 253–274 (MVIIMVVAFLICWVPYASVAFY). Topologically, residues 275-286 (IFTHQGSDFGPI) are extracellular. Glutamine 279 contacts Zn(2+). The chain crosses the membrane as a helical span at residues 287–308 (FMTIPSFFAKSSSIYNPVIYIM). N6-(retinylidene)lysine is present on lysine 296. The Cytoplasmic segment spans residues 309–348 (MNKQLRNCMLTTLCCGRNPLGDDEASTTASKTETSQVAPA). S-palmitoyl cysteine attachment occurs at residues cysteine 322 and cysteine 323. Residues 330-348 (DDEASTTASKTETSQVAPA) are interaction with SAG. Serine 334 is subject to Phosphoserine. Phosphothreonine occurs at positions 335 and 336. Phosphoserine is present on serine 338. 2 positions are modified to phosphothreonine: threonine 340 and threonine 342. Position 343 is a phosphoserine (serine 343).

It belongs to the G-protein coupled receptor 1 family. Opsin subfamily. Homodimer. May form a complex composed of RHO, GRK1 and RCVRN in a Ca(2+)-dependent manner; RCVRN prevents the interaction between GRK1 and RHO. Interacts with GRK1. Interacts (phosphorylated form) with SAG. Interacts with GNAT1. Interacts with GNAT3. SAG and G-proteins compete for a common binding site. Interacts with PRCD; the interaction promotes PRCD stability. Forms a complex with ASAP1 and ARF4. Forms a complex with ASAP1, RAB11A, Rabin8/RAB3IP, ARF4 and RAB11FIP3; the complex regulates Golgi-to-cilia rhodopsin/RHO transport in photoreceptors. In terms of processing, phosphorylated on some or all of the serine and threonine residues present in the C-terminal region. Post-translationally, contains one covalently linked retinal chromophore. Upon light absorption, the covalently bound 11-cis-retinal is converted to all-trans-retinal. After hydrolysis of the Schiff base and release of the covalently bound all-trans-retinal, active rhodopsin is regenerated by binding of a fresh molecule of 11-cis-retinal.

It localises to the membrane. The protein resides in the cell projection. It is found in the cilium. Its subcellular location is the photoreceptor outer segment. Photoreceptor required for image-forming vision at low light intensity. Required for photoreceptor cell viability after birth. Light-induced isomerization of 11-cis to all-trans retinal triggers a conformational change that activates signaling via G-proteins. Subsequent receptor phosphorylation mediates displacement of the bound G-protein alpha subunit by the arrestin SAG and terminates signaling. The chain is Rhodopsin (RHO) from Globicephala melas (Long-finned pilot whale).